Consider the following 152-residue polypeptide: Nucleoside diphosphate kinase A 2 (152 aa).

ATP is bound by residues Lys-12, Phe-60, Arg-88, Thr-94, Arg-105, and Asn-115. The active-site Pros-phosphohistidine intermediate is His-118.

Belongs to the NDK family. In terms of assembly, homohexamer. Requires Mg(2+) as cofactor. Post-translationally, the N-terminus is blocked.

It localises to the cytoplasm. The protein resides in the cell membrane. Its subcellular location is the nucleus. The enzyme catalyses a 2'-deoxyribonucleoside 5'-diphosphate + ATP = a 2'-deoxyribonucleoside 5'-triphosphate + ADP. It catalyses the reaction a ribonucleoside 5'-diphosphate + ATP = a ribonucleoside 5'-triphosphate + ADP. With respect to regulation, autophosphorylation at His-118 increases serine/threonine protein kinase activity of the enzyme. Interaction with the SET complex inhibits exonuclease activity. Major role in the synthesis of nucleoside triphosphates other than ATP. Possesses nucleoside-diphosphate kinase, serine/threonine-specific protein kinase, geranyl and farnesyl pyrophosphate kinase, histidine protein kinase and 3'-5' exonuclease activities. Involved in cell proliferation, differentiation and development, signal transduction, G protein-coupled receptor endocytosis, and gene expression. Required for neural development including neural patterning and cell fate determination. The polypeptide is Nucleoside diphosphate kinase A 2 (NME1-2) (Bos taurus (Bovine)).